Reading from the N-terminus, the 71-residue chain is Protein PSY2 (71 aa).

A signal peptide spans 1-20 (MSFGTRLLLFLILTLPLVTS). Positions 21 to 46 (SSPNTLHVSGIVKTGTTSRFLMMTIE) are excised as a propeptide. Residue Tyr48 is modified to Sulfotyrosine. A disordered region spans residues 50 to 71 (DPSANTRHDPSVPTNAKADTTP). Positions 61–71 (VPTNAKADTTP) are enriched in polar residues. Pro62 carries the post-translational modification 4-hydroxyproline. Pro62 is a glycosylation site (O-linked (Ara...) hydroxyproline). The propeptide occupies 65 to 71 (AKADTTP).

This sequence belongs to the sulfated-peptide plant hormone family. Post-translationally, the sulfation and the glycosylation are required for full activity.

The protein localises to the secreted. Promotes cellular proliferation and expansion. The protein is Protein PSY2 (PSY2) of Arabidopsis thaliana (Mouse-ear cress).